The chain runs to 313 residues: tRNA pseudouridine synthase B (313 aa).

The active-site Nucleophile is aspartate 48.

The protein belongs to the pseudouridine synthase TruB family. Type 1 subfamily.

The enzyme catalyses uridine(55) in tRNA = pseudouridine(55) in tRNA. Responsible for synthesis of pseudouridine from uracil-55 in the psi GC loop of transfer RNAs. The polypeptide is tRNA pseudouridine synthase B (Saccharophagus degradans (strain 2-40 / ATCC 43961 / DSM 17024)).